Consider the following 489-residue polypeptide: Transcription factor TGAL11 (489 aa).

Residues 87–99 (AATATATARPPAT) are compositionally biased toward low complexity. Residues 87–181 (AATATATARP…SDHRMTKTLD (95 aa)) form a disordered region. Residues 121–139 (SNVTADTTDSESSSKNNGD) are compositionally biased toward polar residues. The span at 148–159 (ASQFDQIPQQQQ) shows a compositional bias: low complexity. The segment covering 171–181 (HSDHRMTKTLD) has biased composition (basic and acidic residues). The 45-residue stretch at 181–225 (DPKIMRRLAQNREAARKSRLRKKAYIQQLESSKLRLAQMEQDLER) folds into the bZIP domain. Positions 183-203 (KIMRRLAQNREAARKSRLRKK) are basic motif. The segment at 209–223 (LESSKLRLAQMEQDL) is leucine-zipper. One can recognise a DOG1 domain in the interval 245–460 (AAMFDAEYGR…RALSSLWASR (216 aa)).

Belongs to the bZIP family.

It localises to the nucleus. In terms of biological role, transcriptional regulator involved in defense response. The chain is Transcription factor TGAL11 from Oryza sativa subsp. japonica (Rice).